The chain runs to 357 residues: Adenylate isopentenyltransferase 1, chloroplastic (357 aa).

The N-terminal 71 residues, Met1–Leu71, are a transit peptide targeting the chloroplast. A compositionally biased stretch (low complexity) spans Thr20 to Phe39. The segment at Thr20–Ser58 is disordered. An ATP-binding site is contributed by Gly72–Ser79.

It belongs to the IPP transferase family. In terms of tissue distribution, expressed in the vascular stele of the roots, in the xylem precursor cell files in the root tip, in leaf axils, ovules, and immature seeds.

It is found in the plastid. It localises to the chloroplast. The catalysed reaction is dimethylallyl diphosphate + AMP = N(6)-(dimethylallyl)adenosine 5'-phosphate + diphosphate. It catalyses the reaction dimethylallyl diphosphate + ADP = N(6)-(dimethylallyl)adenosine 5'-diphosphate + diphosphate. It carries out the reaction dimethylallyl diphosphate + ATP = N(6)-(dimethylallyl)adenosine 5'-triphosphate + diphosphate. Functionally, involved in cytokinin biosynthesis. Catalyzes the transfer of an isopentenyl group from dimethylallyl diphosphate (DMAPP) to ATP, ADP and AMP. Adenine, adenosine, isopentenylpyrophosphate and 1-hydroxy-2-methyl-2-(E)-butenyl 4-diphosphate (HMBDP) are not used as substrates. The protein is Adenylate isopentenyltransferase 1, chloroplastic (IPT1) of Arabidopsis thaliana (Mouse-ear cress).